The chain runs to 345 residues: S-adenosylmethionine:tRNA ribosyltransferase-isomerase (345 aa).

This sequence belongs to the QueA family. As to quaternary structure, monomer.

It is found in the cytoplasm. The enzyme catalyses 7-aminomethyl-7-carbaguanosine(34) in tRNA + S-adenosyl-L-methionine = epoxyqueuosine(34) in tRNA + adenine + L-methionine + 2 H(+). It functions in the pathway tRNA modification; tRNA-queuosine biosynthesis. Its function is as follows. Transfers and isomerizes the ribose moiety from AdoMet to the 7-aminomethyl group of 7-deazaguanine (preQ1-tRNA) to give epoxyqueuosine (oQ-tRNA). In Shewanella sp. (strain ANA-3), this protein is S-adenosylmethionine:tRNA ribosyltransferase-isomerase.